A 321-amino-acid polypeptide reads, in one-letter code: ATP-dependent 6-phosphofructokinase (321 aa).

G12 contributes to the ATP binding site. Residues 22 to 26 (RGVVR) and 55 to 60 (RYSVSD) each bind ADP. ATP is bound by residues 73–74 (RF) and 103–106 (GDGS). D104 contributes to the Mg(2+) binding site. Residue 127–129 (TID) participates in substrate binding. The Proton acceptor role is filled by D129. R156 provides a ligand contact to ADP. Residues R164 and 171–173 (MGR) each bind substrate. Residues 187-189 (GCE), R213, and 215-217 (KRH) each bind ADP. Residues E224, R245, and 251-254 (HIQR) each bind substrate.

The protein belongs to the phosphofructokinase type A (PFKA) family. ATP-dependent PFK group I subfamily. Prokaryotic clade 'B1' sub-subfamily. In terms of assembly, homotetramer. Requires Mg(2+) as cofactor.

It is found in the cytoplasm. The enzyme catalyses beta-D-fructose 6-phosphate + ATP = beta-D-fructose 1,6-bisphosphate + ADP + H(+). It functions in the pathway carbohydrate degradation; glycolysis; D-glyceraldehyde 3-phosphate and glycerone phosphate from D-glucose: step 3/4. Allosterically activated by ADP and other diphosphonucleosides, and allosterically inhibited by phosphoenolpyruvate. In terms of biological role, catalyzes the phosphorylation of D-fructose 6-phosphate to fructose 1,6-bisphosphate by ATP, the first committing step of glycolysis. The sequence is that of ATP-dependent 6-phosphofructokinase from Haemophilus influenzae (strain 86-028NP).